We begin with the raw amino-acid sequence, 661 residues long: Ubiquitin carboxyl-terminal hydrolase 51 (661 aa).

The segment at 1 to 144 (MRGTQGAQEM…SENSLLEVGS (144 aa)) is disordered. Residues 21-30 (TSENLTSRGS) are compositionally biased toward polar residues. Residues 53 to 71 (PRRKPRPRPQPRSRSRGGR) are compositionally biased toward basic residues. Residues 75–96 (APPPPPAKPPPPPPAPPPPPLP) show a composition bias toward pro residues. The UBP-type zinc-finger motif lies at 149–267 (TGCCHVESFK…KETKEKILGL (119 aa)). Zn(2+) contacts are provided by C151, H153, C192, C195, C205, C208, C213, H218, H222, H228, C241, and C244. One can recognise a USP domain in the interval 320-656 (RGLINLGNTC…EGYLLFYHRQ (337 aa)). C329 serves as the catalytic Nucleophile. H615 serves as the catalytic Proton acceptor.

Belongs to the peptidase C19 family. As to quaternary structure, interacts with H2A.

It localises to the chromosome. The catalysed reaction is Thiol-dependent hydrolysis of ester, thioester, amide, peptide and isopeptide bonds formed by the C-terminal Gly of ubiquitin (a 76-residue protein attached to proteins as an intracellular targeting signal).. Functionally, specifically deubiquitinates 'Lys-14' (H2AK13Ub) and 'Lys-16'(H2AK15Ub) of histone H2A regulating the DNA damage response at double-strand breaks (DSBs). USP51 is recruited to chromatin after DNA damage and regulates the dynamic assembly/disassembly of TP53BP1 and BRCA1. Functions in DNA double-strand break repair also by mediating the deubiquitination and subsequent stabilization of DGCR8, leading to the recruitment of DGCR8 binding partners to double strand breaks such as RNF168 or MDC1. In addition, promotes the deubiquitination and stabilization of the transcriptional repressor ZEB1. This Mus musculus (Mouse) protein is Ubiquitin carboxyl-terminal hydrolase 51.